We begin with the raw amino-acid sequence, 131 residues long: Photosystem II extrinsic protein U (131 aa).

A signal peptide spans 1–28 (MKFISRLLVACSLLIGLMGFLGADLAQA). The propeptide occupies 29 to 36 (LTPNPILA).

It belongs to the PsbU family. PSII is composed of 1 copy each of membrane proteins PsbA, PsbB, PsbC, PsbD, PsbE, PsbF, PsbH, PsbI, PsbJ, PsbK, PsbL, PsbM, PsbT, PsbX, PsbY, PsbZ, Psb30/Ycf12, peripheral proteins PsbO, CyanoQ (PsbQ), PsbU, PsbV and a large number of cofactors. It forms dimeric complexes.

The protein localises to the cellular thylakoid membrane. One of the extrinsic, lumenal subunits of photosystem II (PSII). PSII is a light-driven water plastoquinone oxidoreductase, using light energy to abstract electrons from H(2)O, generating a proton gradient subsequently used for ATP formation. The extrinsic proteins stabilize the structure of photosystem II oxygen-evolving complex (OEC), the ion environment of oxygen evolution and protect the OEC against heat-induced inactivation. May modulate the Cl(-) requirement for oxygen evolution. In Synechocystis sp. (strain ATCC 27184 / PCC 6803 / Kazusa), this protein is Photosystem II extrinsic protein U.